Here is a 51-residue protein sequence, read N- to C-terminus: Large ribosomal subunit protein eL39 (51 aa).

This sequence belongs to the eukaryotic ribosomal protein eL39 family. In terms of assembly, interacts with IMPACT.

In Gallus gallus (Chicken), this protein is Large ribosomal subunit protein eL39 (RPL39).